The primary structure comprises 180 residues: Endoribonuclease YbeY (180 aa).

Residues His-136, His-140, and His-146 each contribute to the Zn(2+) site.

It belongs to the endoribonuclease YbeY family. Requires Zn(2+) as cofactor.

The protein resides in the cytoplasm. Functionally, single strand-specific metallo-endoribonuclease involved in late-stage 70S ribosome quality control and in maturation of the 3' terminus of the 16S rRNA. This is Endoribonuclease YbeY from Synechococcus sp. (strain CC9902).